The primary structure comprises 102 residues: Large ribosomal subunit protein bL21 (102 aa).

Belongs to the bacterial ribosomal protein bL21 family. In terms of assembly, part of the 50S ribosomal subunit. Contacts protein L20.

Its function is as follows. This protein binds to 23S rRNA in the presence of protein L20. This Geotalea uraniireducens (strain Rf4) (Geobacter uraniireducens) protein is Large ribosomal subunit protein bL21.